The sequence spans 479 residues: Ammonium transporter Rh type C (479 aa).

Residues 1 to 9 lie on the Cytoplasmic side of the membrane; that stretch reads MAWNTNLRW. A helical transmembrane segment spans residues 10-30; sequence RLPLTCLLLQVIMVILFGVFV. Topologically, residues 31 to 60 are extracellular; it reads RYDFEADAHWWSERTHKNLSDMENEFYYRY. N-linked (GlcNAc...) asparagine glycosylation is present at Asn48. The helical transmembrane segment at 61 to 81 threads the bilayer; the sequence is PSFQDVHVMVFVGFGFLMTFL. Over 82–85 the chain is Cytoplasmic; the sequence is QRYG. Residues 86–106 traverse the membrane as a helical segment; the sequence is FSAVGFNFLLAAFGIQWALLM. Over 107–123 the chain is Extracellular; that stretch reads QGWFHFLQDRYIVVGVE. The chain crosses the membrane as a helical span at residues 124 to 144; it reads NLINADFCVASVCVAFGAVLG. At 145–148 the chain is on the cytoplasmic side; sequence KVSP. A helical membrane pass occupies residues 149–169; sequence IQLLIMTFFQVTLFAVNEFIL. Topologically, residues 170-177 are extracellular; sequence LNLLKVKD. A helical membrane pass occupies residues 178 to 200; that stretch reads AGGSMTIHTFGAYFGLTVTRILY. Topologically, residues 201–218 are cytoplasmic; the sequence is RRNLEQSKERQNSVYQSD. The chain crosses the membrane as a helical span at residues 219-239; that stretch reads LFAMIGTLFLWMYWPSFNSAI. Over 240–250 the chain is Extracellular; the sequence is SYHGDSQHRAA. Residues 251-271 form a helical membrane-spanning segment; sequence INTYCSLAACVLTSVAISSAL. Topologically, residues 272 to 281 are cytoplasmic; the sequence is HKKGKLDMVH. A helical membrane pass occupies residues 282–302; the sequence is IQNATLAGGVAVGTAAEMMLM. Residue Pro303 is a topological domain, extracellular. Residues 304–324 form a helical membrane-spanning segment; the sequence is YGALIIGFVCGIISTLGFVYL. Over 325-345 the chain is Cytoplasmic; sequence TPFLESRLHIQDTCGINNLHG. The chain crosses the membrane as a helical span at residues 346 to 366; sequence IPGIIGGIVGAVTAASASLEV. Residues 367-394 are Extracellular-facing; the sequence is YGKEGLVHSFDFQGFNGDWTARTQGKFQ. A helical membrane pass occupies residues 395-415; that stretch reads IYGLLVTLAMALMGGIIVGLI. Residues 416–479 lie on the Cytoplasmic side of the membrane; that stretch reads LRLPFWGQPS…PMASSVPLVP (64 aa).

Belongs to the ammonium transporter (TC 2.A.49) family. Rh subfamily. Homotrimer. N-glycosylated. As to expression, expressed in brain, testis, placenta, pancreas, esophagus and prostate. Expressed in squamous epithelial tissues (at protein level). Expressed in kidney.

The protein localises to the cell membrane. It localises to the apical cell membrane. It carries out the reaction NH4(+)(in) = NH4(+)(out). The enzyme catalyses methylamine(out) = methylamine(in). The catalysed reaction is CO2(out) = CO2(in). In terms of biological role, ammonium transporter involved in the maintenance of acid-base homeostasis. Transports ammonium and its related derivative methylammonium across the plasma membrane of epithelial cells likely contributing to renal transepithelial ammonia transport and ammonia metabolism. Postulated to primarily mediate an electroneutral bidirectional transport of NH3 ammonia species according to a mechanism that implies interaction of an NH4(+) ion with acidic residues of the pore entry followed by dissociation of NH4(+) into NH3 and H(+). As a result NH3 transits through the central pore and is protonated on the extracellular side reforming NH4(+). May act as a CO2 channel providing for renal acid secretion. The sequence is that of Ammonium transporter Rh type C (RHCG) from Homo sapiens (Human).